A 339-amino-acid chain; its full sequence is D-erythrose-4-phosphate dehydrogenase (339 aa).

NAD(+) contacts are provided by residues 12–13 (RI) and arginine 81. Substrate contacts are provided by residues 154-156 (SCT), arginine 200, 213-214 (TR), and arginine 236. Cysteine 155 functions as the Nucleophile in the catalytic mechanism. Asparagine 318 is an NAD(+) binding site.

Belongs to the glyceraldehyde-3-phosphate dehydrogenase family. Epd subfamily. In terms of assembly, homotetramer.

The protein resides in the cytoplasm. It carries out the reaction D-erythrose 4-phosphate + NAD(+) + H2O = 4-phospho-D-erythronate + NADH + 2 H(+). The protein operates within cofactor biosynthesis; pyridoxine 5'-phosphate biosynthesis; pyridoxine 5'-phosphate from D-erythrose 4-phosphate: step 1/5. Functionally, catalyzes the NAD-dependent conversion of D-erythrose 4-phosphate to 4-phosphoerythronate. In Cronobacter sakazakii (strain ATCC BAA-894) (Enterobacter sakazakii), this protein is D-erythrose-4-phosphate dehydrogenase.